The chain runs to 97 residues: uncharacterized protein (97 aa).

The segment covering 1–24 has biased composition (basic and acidic residues); the sequence is MTQKNGADRPDDYKRFSSLDKEYD. The tract at residues 1–97 is disordered; it reads MTQKNGADRP…FEGTIDQNLD (97 aa). The segment covering 31–43 has biased composition (low complexity); the sequence is SNTETESVNTETQ. A compositionally biased stretch (basic and acidic residues) spans 44–53; it reads THNKENKNDT.

This is an uncharacterized protein from Bacillus subtilis (strain 168).